We begin with the raw amino-acid sequence, 289 residues long: 4-diphosphocytidyl-2-C-methyl-D-erythritol kinase (289 aa).

Lys-10 is an active-site residue. 94-104 contributes to the ATP binding site; the sequence is PVAAGLAGGSS. Asp-136 is an active-site residue.

This sequence belongs to the GHMP kinase family. IspE subfamily.

It carries out the reaction 4-CDP-2-C-methyl-D-erythritol + ATP = 4-CDP-2-C-methyl-D-erythritol 2-phosphate + ADP + H(+). The protein operates within isoprenoid biosynthesis; isopentenyl diphosphate biosynthesis via DXP pathway; isopentenyl diphosphate from 1-deoxy-D-xylulose 5-phosphate: step 3/6. Catalyzes the phosphorylation of the position 2 hydroxy group of 4-diphosphocytidyl-2C-methyl-D-erythritol. The sequence is that of 4-diphosphocytidyl-2-C-methyl-D-erythritol kinase from Bacillus anthracis (strain CDC 684 / NRRL 3495).